The chain runs to 89 residues: Acylphosphatase (89 aa).

The Acylphosphatase-like domain occupies 3–89 (ALFIKISGRV…QNFTSFDIVP (87 aa)). Residues arginine 18 and asparagine 36 contribute to the active site.

The protein belongs to the acylphosphatase family.

The catalysed reaction is an acyl phosphate + H2O = a carboxylate + phosphate + H(+). This Pseudothermotoga lettingae (strain ATCC BAA-301 / DSM 14385 / NBRC 107922 / TMO) (Thermotoga lettingae) protein is Acylphosphatase (acyP).